The following is a 401-amino-acid chain: Nicotinate phosphoribosyltransferase (401 aa).

H221 carries the post-translational modification Phosphohistidine; by autocatalysis.

Belongs to the NAPRTase family. In terms of processing, transiently phosphorylated on a His residue during the reaction cycle. Phosphorylation strongly increases the affinity for substrates and increases the rate of nicotinate D-ribonucleotide production. Dephosphorylation regenerates the low-affinity form of the enzyme, leading to product release.

It catalyses the reaction nicotinate + 5-phospho-alpha-D-ribose 1-diphosphate + ATP + H2O = nicotinate beta-D-ribonucleotide + ADP + phosphate + diphosphate. It functions in the pathway cofactor biosynthesis; NAD(+) biosynthesis; nicotinate D-ribonucleotide from nicotinate: step 1/1. Functionally, catalyzes the synthesis of beta-nicotinate D-ribonucleotide from nicotinate and 5-phospho-D-ribose 1-phosphate at the expense of ATP. The polypeptide is Nicotinate phosphoribosyltransferase (Erwinia tasmaniensis (strain DSM 17950 / CFBP 7177 / CIP 109463 / NCPPB 4357 / Et1/99)).